The following is a 362-amino-acid chain: Peptide chain release factor 1 (362 aa).

Residue Q236 is modified to N5-methylglutamine.

Belongs to the prokaryotic/mitochondrial release factor family. Methylated by PrmC. Methylation increases the termination efficiency of RF1.

The protein resides in the cytoplasm. In terms of biological role, peptide chain release factor 1 directs the termination of translation in response to the peptide chain termination codons UAG and UAA. This chain is Peptide chain release factor 1, found in Lactobacillus johnsonii (strain CNCM I-12250 / La1 / NCC 533).